Reading from the N-terminus, the 410-residue chain is BRCA1-A complex subunit Abraxas 1 (410 aa).

In terms of domain architecture, MPN spans 7-160 (TAVLSGFVLG…HALYKPQKGL (154 aa)). Ser48 carries the post-translational modification Phosphoserine. Residues 208 to 261 (SLKEVQKINEMYTSLQDELKSICEKVEHSERAVEKLLNDVNRLKGEIKKRKQAQ) adopt a coiled-coil conformation. The tract at residues 354–410 (DGWQFKKSRLGGIQNRPSKTDTNSSNQEQASTVSSPETDEEIERMKGSGEYPQSPTF) is disordered. The span at 368–389 (NRPSKTDTNSSNQEQASTVSSP) shows a compositional bias: polar residues. Ser387 and Ser388 each carry phosphoserine. Thr391 is modified (phosphothreonine). The residue at position 407 (Ser407) is a Phosphoserine. Positions 407-410 (SPTF) match the pSXXF motif motif.

This sequence belongs to the FAM175 family. Abraxas subfamily. As to quaternary structure, component of the ARISC complex, at least composed of UIMC1/RAP80, ABRAXAS1, BRCC3/BRCC36, BABAM2 and BABAM1/NBA1. Component of the BRCA1-A complex, at least composed of the BRCA1, BARD1, UIMC1/RAP80, ABRAXAS1, BRCC3/BRCC36, BABAM2 and BABAM1/NBA1. In the complex, interacts directly with UIMC1/RAP80, BRCC3/BRCC36 and BABAM2. Homodimer. Interacts directly (when phosphorylated at Ser-407) with BRCA1. The phosphorylated homodimer can interact directly with two BRCA1 chains, giving rise to a heterotetramer. Binds polyubiquitin. In terms of processing, phosphorylation of Ser-407 of the pSXXF motif by ATM or ATR constitutes a specific recognition motif for the BRCT domain of BRCA1.

It localises to the nucleus. Its function is as follows. Involved in DNA damage response and double-strand break (DSB) repair. Component of the BRCA1-A complex, acting as a central scaffold protein that assembles the various components of the complex and mediates the recruitment of BRCA1. The BRCA1-A complex specifically recognizes 'Lys-63'-linked ubiquitinated histones H2A and H2AX at DNA lesion sites, leading to target the BRCA1-BARD1 heterodimer to sites of DNA damage at DSBs. This complex also possesses deubiquitinase activity that specifically removes 'Lys-63'-linked ubiquitin on histones H2A and H2AX. The polypeptide is BRCA1-A complex subunit Abraxas 1 (Bos taurus (Bovine)).